Here is a 267-residue protein sequence, read N- to C-terminus: Putative ankyrin repeat protein RF_1099 (267 aa).

ANK repeat units follow at residues 46-75 (DPITPIADAIKADNLEEVKKILDEGYGVNQ), 78-107 (LGWVPLDYAISNNNIKIADFLLKRDASMSL), 136-165 (DGITGMMLAAERNNPDLIKLLLKLGVNPNV), and 170-199 (TGMTSLMYAASYLNVEVVRVLLEQGVDPNI). Residues 238–265 (KQKIIKERNSIKTRNKEKEKEIKKLFNS) adopt a coiled-coil conformation.

This is Putative ankyrin repeat protein RF_1099 from Rickettsia felis (strain ATCC VR-1525 / URRWXCal2) (Rickettsia azadi).